The chain runs to 731 residues: Elongation factor 2 (731 aa).

Residues 19-234 enclose the tr-type G domain; the sequence is EYIRNIGICA…DIIDYCNEGK (216 aa). GTP is bound by residues 28–35, 94–98, and 148–151; these read AHIDHGKT, DTPGH, and NKVD. H598 carries the diphthamide modification.

Belongs to the TRAFAC class translation factor GTPase superfamily. Classic translation factor GTPase family. EF-G/EF-2 subfamily.

It localises to the cytoplasm. Its function is as follows. Catalyzes the GTP-dependent ribosomal translocation step during translation elongation. During this step, the ribosome changes from the pre-translocational (PRE) to the post-translocational (POST) state as the newly formed A-site-bound peptidyl-tRNA and P-site-bound deacylated tRNA move to the P and E sites, respectively. Catalyzes the coordinated movement of the two tRNA molecules, the mRNA and conformational changes in the ribosome. The protein is Elongation factor 2 of Methanobrevibacter ruminantium (strain ATCC 35063 / DSM 1093 / JCM 13430 / OCM 146 / M1) (Methanobacterium ruminantium).